The following is an 82-amino-acid chain: Acyl carrier protein (82 aa).

The 75-residue stretch at 3-77 (SSIFDKVQNI…QAIEFIQHAI (75 aa)) folds into the Carrier domain. Ser37 carries the post-translational modification O-(pantetheine 4'-phosphoryl)serine.

The protein belongs to the acyl carrier protein (ACP) family. 4'-phosphopantetheine is transferred from CoA to a specific serine of apo-ACP by AcpS. This modification is essential for activity because fatty acids are bound in thioester linkage to the sulfhydryl of the prosthetic group.

The protein resides in the plastid. The protein localises to the chloroplast. It functions in the pathway lipid metabolism; fatty acid biosynthesis. Its function is as follows. Carrier of the growing fatty acid chain in fatty acid biosynthesis. In Gracilaria tenuistipitata var. liui (Red alga), this protein is Acyl carrier protein.